The sequence spans 319 residues: Acetyl-coenzyme A carboxylase carboxyl transferase subunit alpha (319 aa).

The CoA carboxyltransferase C-terminal domain maps to 35-296; sequence DLDKEIEQLE…KATLLRQLED (262 aa).

It belongs to the AccA family. As to quaternary structure, acetyl-CoA carboxylase is a heterohexamer composed of biotin carboxyl carrier protein (AccB), biotin carboxylase (AccC) and two subunits each of ACCase subunit alpha (AccA) and ACCase subunit beta (AccD).

The protein resides in the cytoplasm. The enzyme catalyses N(6)-carboxybiotinyl-L-lysyl-[protein] + acetyl-CoA = N(6)-biotinyl-L-lysyl-[protein] + malonyl-CoA. It functions in the pathway lipid metabolism; malonyl-CoA biosynthesis; malonyl-CoA from acetyl-CoA: step 1/1. Functionally, component of the acetyl coenzyme A carboxylase (ACC) complex. First, biotin carboxylase catalyzes the carboxylation of biotin on its carrier protein (BCCP) and then the CO(2) group is transferred by the carboxyltransferase to acetyl-CoA to form malonyl-CoA. This Vibrio parahaemolyticus serotype O3:K6 (strain RIMD 2210633) protein is Acetyl-coenzyme A carboxylase carboxyl transferase subunit alpha.